Reading from the N-terminus, the 575-residue chain is Bifunctional decalin synthase calF (575 aa).

An N-terminal signal peptide occupies residues 1–18; the sequence is MSFKPLLLSLSLLSPALG. Asn-46, Asn-103, Asn-127, Asn-175, Asn-268, Asn-308, Asn-359, Asn-425, and Asn-485 each carry an N-linked (GlcNAc...) asparagine glycan. Positions 118–297 constitute an FAD-binding PCMH-type domain; that stretch reads LGNYASYSIN…LSMTTKVFQD (180 aa).

It belongs to the oxygen-dependent FAD-linked oxidoreductase family.

Its pathway is secondary metabolite biosynthesis. In terms of biological role, bifunctional decaline synthase; part of the gene cluster that mediates the biosynthesis of calbistrin A and related compounds. Calbistrin A is a secondary metabolite with an interesting structure that was recently found to have bioactivity against leukemia cells. It consists of two polyketides linked by an ester bond: a bicyclic decalin containing polyketide and a linear 12 carbon dioic acid structure. The polyketide synthase calA is probably responsible for forming the decalin moiety. Because calA lacks a designated enoylreductase (ER) domain, the required activity is provided by the trans-enoyl reductase calK. Following release from the PKS, calF then probably catalyzes the oxidation and the subsequent Diels Alder cycloisomerization that lead to the formation of the decalin moiety. The decalin polyketide backbone includes two C-methyl groups, at C7 and C11 in backbone, of which the C7 position is probably methylated by the methyltransferase domain of calA. A candidate for adding the methyl group at C11, if not done by CalA, is the cluster methyltransferase calH. Several additional tailoring enzymes within the cluster could be involved in the modification of the decalin polyketide product. Those include the 3 cytochrome P450 monooxygenases CalE, CalG and CalL, of which one might be responsible for the introduction of the extra hydroxyl group attached to the backbone of the decalin moiety, at position C9 in the backbone, that allows for attachment of the linear moiety. One tailoring enzyme activity that is expected to be involved in biosynthesis of calbistrin is an acyltransferase for connecting the two polyketide synthase products, and which could be performed by the cluster acyltransferase calJ. The enzyme responsible for the biosynthesis of the linear moiety, probably a second PKS, has not been identified yet. The chain is Bifunctional decalin synthase calF from Penicillium decumbens.